The sequence spans 321 residues: Lipoyl synthase (321 aa).

[4Fe-4S] cluster-binding residues include cysteine 68, cysteine 73, cysteine 79, cysteine 94, cysteine 98, cysteine 101, and serine 308. A Radical SAM core domain is found at phenylalanine 80–threonine 297.

This sequence belongs to the radical SAM superfamily. Lipoyl synthase family. It depends on [4Fe-4S] cluster as a cofactor.

It localises to the cytoplasm. The catalysed reaction is [[Fe-S] cluster scaffold protein carrying a second [4Fe-4S](2+) cluster] + N(6)-octanoyl-L-lysyl-[protein] + 2 oxidized [2Fe-2S]-[ferredoxin] + 2 S-adenosyl-L-methionine + 4 H(+) = [[Fe-S] cluster scaffold protein] + N(6)-[(R)-dihydrolipoyl]-L-lysyl-[protein] + 4 Fe(3+) + 2 hydrogen sulfide + 2 5'-deoxyadenosine + 2 L-methionine + 2 reduced [2Fe-2S]-[ferredoxin]. It participates in protein modification; protein lipoylation via endogenous pathway; protein N(6)-(lipoyl)lysine from octanoyl-[acyl-carrier-protein]: step 2/2. In terms of biological role, catalyzes the radical-mediated insertion of two sulfur atoms into the C-6 and C-8 positions of the octanoyl moiety bound to the lipoyl domains of lipoate-dependent enzymes, thereby converting the octanoylated domains into lipoylated derivatives. This chain is Lipoyl synthase, found in Pectobacterium carotovorum subsp. carotovorum (strain PC1).